Consider the following 491-residue polypeptide: Cobyric acid synthase (491 aa).

The GATase cobBQ-type domain occupies 253 to 429 (AHRVAVVRLP…WHGSLEGDAL (177 aa)). Cysteine 334 serves as the catalytic Nucleophile. The active site involves histidine 421.

The protein belongs to the CobB/CobQ family. CobQ subfamily.

It functions in the pathway cofactor biosynthesis; adenosylcobalamin biosynthesis. Catalyzes amidations at positions B, D, E, and G on adenosylcobyrinic A,C-diamide. NH(2) groups are provided by glutamine, and one molecule of ATP is hydrogenolyzed for each amidation. The polypeptide is Cobyric acid synthase (Mycobacterium ulcerans (strain Agy99)).